An 861-amino-acid polypeptide reads, in one-letter code: ToMV resistance protein Tm-2(GCR236) (861 aa).

Positions 63–83 (VKNLLKDIQELAGDVEDLLDD) form a coiled coil. An NB-ARC domain is found at 162–388 (DDFNMLQAKL…LESMGHKVQD (227 aa)). ATP is bound at residue 185 to 192 (GMPGLGKT). LRR repeat units lie at residues 225 to 248 (LDIAKQIGLTEQKMKENLEDNLRS), 305 to 327 (LHALQPLESEKSFELFTKKIFNF), 388 to 411 (DGCAKVLALSYNDLPIASRPCFLY), 449 to 472 (LAEDVLNDLVSRNLIQLAKRTYNG), 510 to 536 (VARLRRITFYSDNVMIEFFRSNPKLEK), 585 to 608 (MTCLRYLRLEGNICGKLPNSIVKL), 609 to 631 (TRLETIDIDRRSLIQPPSGVWES), 652 to 680 (ISSFYPNIYSLHPNNLQTLMWIPDKFFEP), 689 to 710 (LRKLGILGVSNSTVKMLSIFSP), 712 to 735 (LKALEVLKLSFSSDPSEQIKLSSY), 736 to 758 (PHIAKLHLNVNRTMALNSQSFPP), 784 to 810 (LRKLKMFICKYNEEKMDLSGEANGYSF), and 811 to 835 (PQLEVLHIHSPNGLSEVTCTDDVSM).

This sequence belongs to the disease resistance NB-LRR family. (Microbial infection) Interacts with tobamoviruses mouvement protein at the plasma membrane; this interaction triggers defense responses leading to programmed cell death. In terms of assembly, binds to HSP90 proteins; this interaction seems required for defense responses toward tobamoviruses.

It is found in the cell membrane. Functionally, inhibitor of viral mouvements which confers resistance to some tobamoviruses including tomato mosaic virus (ToMV) (e.g. isolates L, W3 and SL-1) and tobacco mosaic virus (TMV), but not to resistance-breaking isolates (e.g. B7, LT1, LII, Ltbl, ToMV2, and ToMV1-2) ToMV and tomato brown rugose fruit virus (ToBRFV). Elicits a hypersensitive reaction in response to avirulent (Avr) movement proteins from resistance inducing tobamoviruses (e.g. ToMV and TMV) strains, thus leading to programmed cell death. This chain is ToMV resistance protein Tm-2(GCR236), found in Solanum lycopersicum (Tomato).